The chain runs to 634 residues: MINIRFPDGSIREFEAGVNSLDVAKSISPSLAKATMAAYIDDQLKDAKDAINSNCELRLITVKDPEGLEILRHSCAHLLAHAVKELYPNTEVTIGPVVDNGFYYDFSFKESIGEADLPTIEKKMKELAKKSAPVSYRVVPKTEAIEFFKAQGENYKVEIIDSIADEQMKIYTQDNFSDLCRGPHIPNTSVLKAFKLTKLAGAYWRGNSDNEMLTRIYGTCWATKEDLEQYLNMLEEAEKRDHRKIGKVLDLFHFQEDSPGIAFWHDNGVRIWRQVEDYMRASNNKYGCSEIRTPLIADFSLWQKSGHASKYAENMFATKSENRDFAIRPMNCPTCVQVYNTKLHSYRDLPIRMAEFGIVHRNEPSGSLHGLLRVRSFTQDDGHIFCTPEQVEEEVILMVQQCFEVYKDFGFNDFAVKIALRPENRIGDDETWDKSEQILKNALDANNVSYELFPGEGAFYGPKIEFHLKDAIGRSWQCGTIQLDFSMPQRLGATYIDKNGEKQVSVMLHRAIVGSLERFIGMLIEHYAGNLPLWLAPVQVAVMGISNNQDDYCKEVFIMLEKNGIRAKLDLRNEKIGFKIREHTLLRVPYLVILGKNEQEQKIITIRKHSGEDLGQMSVDDFCAFLDKQIQAKE.

Residues 1-61 (MINIRFPDGS…NSNCELRLIT (61 aa)) form the TGS domain. Residues 241–532 (DHRKIGKVLD…LIEHYAGNLP (292 aa)) are catalytic. Zn(2+) contacts are provided by Cys332, His383, and His509.

The protein belongs to the class-II aminoacyl-tRNA synthetase family. Homodimer. Zn(2+) is required as a cofactor.

The protein localises to the cytoplasm. It carries out the reaction tRNA(Thr) + L-threonine + ATP = L-threonyl-tRNA(Thr) + AMP + diphosphate + H(+). In terms of biological role, catalyzes the attachment of threonine to tRNA(Thr) in a two-step reaction: L-threonine is first activated by ATP to form Thr-AMP and then transferred to the acceptor end of tRNA(Thr). Also edits incorrectly charged L-seryl-tRNA(Thr). In Francisella tularensis subsp. holarctica (strain OSU18), this protein is Threonine--tRNA ligase.